The sequence spans 108 residues: UPF0102 protein Sfri_0388 (108 aa).

This sequence belongs to the UPF0102 family.

This Shewanella frigidimarina (strain NCIMB 400) protein is UPF0102 protein Sfri_0388.